The sequence spans 104 residues: Class I hydrophobin 4 (104 aa).

A signal peptide spans 1–16 (MFASTVFVSLLAVAAA). 4 disulfide bridges follow: cysteine 26–cysteine 85, cysteine 34–cysteine 79, cysteine 35–cysteine 61, and cysteine 86–cysteine 99.

Belongs to the fungal hydrophobin family. In terms of assembly, self-assembles to form functional amyloid fibrils called rodlets. Self-assembly into fibrillar rodlets occurs spontaneously at hydrophobic:hydrophilic interfaces and the rodlets further associate laterally to form amphipathic monolayers.

The protein resides in the secreted. Its subcellular location is the cell wall. Functionally, aerial growth, conidiation, and dispersal of filamentous fungi in the environment rely upon a capability of their secreting small amphipathic proteins called hydrophobins (HPBs) with low sequence identity. Class I can self-assemble into an outermost layer of rodlet bundles on aerial cell surfaces, conferring cellular hydrophobicity that supports fungal growth, development and dispersal; whereas Class II form highly ordered films at water-air interfaces through intermolecular interactions but contribute nothing to the rodlet structure. HYD4 is a class I hydrophobin that negatively regulates aerial mycelial growth, conidiation, carotenoid and adenosine synthesis, resistance to oxidant stress, and fruiting body development. Seems not to be involved in the mycelial growth rate, the hydrophobicity of the mycelia and conidia, nor the conidial virulence on silkworm pupae. This is Class I hydrophobin 4 from Cordyceps militaris (Caterpillar fungus).